Consider the following 313-residue polypeptide: Pyrimidine-specific ribonucleoside hydrolase RihB (313 aa).

Catalysis depends on glutamate 11, which acts as the Proton acceptor. Positions 11, 16, and 124 each coordinate Ca(2+). Positions 227 and 239 each coordinate substrate. Aspartate 240 is a Ca(2+) binding site.

It belongs to the IUNH family. RihB subfamily. Homotetramer. Requires Ca(2+) as cofactor.

It catalyses the reaction a pyrimidine ribonucleoside + H2O = a pyrimidine nucleobase + D-ribose. In terms of biological role, hydrolyzes cytidine or uridine to ribose and cytosine or uracil, respectively. Has a clear preference for cytidine over uridine. Strictly specific for ribonucleosides. This is Pyrimidine-specific ribonucleoside hydrolase RihB from Shigella flexneri serotype 5b (strain 8401).